The chain runs to 277 residues: MQQYHDALQHILDHGVETTDRTGTGTLSCFGMQQRYDLAEGFPLVTTKKLHLRSIIHELLWFLSGDTNIRYLKENGVSIWDEWADENGDLGPVYGYQWRKFPRLELAEGTLGDEPLYRAGTVDQISELLDMIRKSPDSRRLIVTAWNPGDVPDMALPPCHSLWQLRILGGKMHLQLYQRSADMFLGVPFNIASYALLLHMLAHVTGYEVGSFVHTMGDAHIYSNHMEQVKLQLSRSPKSLPQLRIARDVSSIFDFKYEDFEILGYDPDPVIKAPVAV.

DUMP is bound at residue R21. Position 51 (H51) interacts with (6R)-5,10-methylene-5,6,7,8-tetrahydrofolate. 139–140 (RR) serves as a coordination point for dUMP. C159 functions as the Nucleophile in the catalytic mechanism. DUMP-binding positions include 179 to 182 (RSAD), N190, and 220 to 222 (HIY). D182 provides a ligand contact to (6R)-5,10-methylene-5,6,7,8-tetrahydrofolate. (6R)-5,10-methylene-5,6,7,8-tetrahydrofolate is bound at residue A276.

It belongs to the thymidylate synthase family. Bacterial-type ThyA subfamily. As to quaternary structure, homodimer.

Its subcellular location is the cytoplasm. It catalyses the reaction dUMP + (6R)-5,10-methylene-5,6,7,8-tetrahydrofolate = 7,8-dihydrofolate + dTMP. The protein operates within pyrimidine metabolism; dTTP biosynthesis. In terms of biological role, catalyzes the reductive methylation of 2'-deoxyuridine-5'-monophosphate (dUMP) to 2'-deoxythymidine-5'-monophosphate (dTMP) while utilizing 5,10-methylenetetrahydrofolate (mTHF) as the methyl donor and reductant in the reaction, yielding dihydrofolate (DHF) as a by-product. This enzymatic reaction provides an intracellular de novo source of dTMP, an essential precursor for DNA biosynthesis. The chain is Thymidylate synthase from Ruegeria sp. (strain TM1040) (Silicibacter sp.).